The following is a 93-amino-acid chain: LSM complex subunit LSM5 (93 aa).

The Sm domain maps to 7–87 (LPLEVIDKTI…IAILVPGGKK (81 aa)).

Belongs to the snRNP Sm proteins family. As to quaternary structure, component of the heptameric LSM1-LSM7 complex that forms a seven-membered ring structure with a donut shape. The LSm subunits are arranged in the order LSM1, LSM2, LSM3, LSM6, LSM5, LSM7 and LSM4. Except for LSM1, where a C-terminal helix crosses the ring structure to form additional interactions with LSM3 and LSM6, each subunit interacts only with its two neighboring subunits. The LSM1-LSM7 complex interacts with PAT1; within the complex PAT1 has direct interactions with LSM2 and LSM3. The LSM1-LSM7 complex interacts with XRN1. Component of the heptameric LSM2-LSM8 complex that forms a seven-membered ring structure with a donut shape; an RNA strand can pass through the hole in the center of the ring structure. The LSm subunits are arranged in the order LSM8, LSM2, LSM3, LSM6, LSM5, LSM7 and LSM4. Component of the spliceosome U4/U6-U5 tri-snRNP complex composed of the U4, U6 and U5 snRNAs and at least PRP3, PRP4, PRP6, PRP8, PRP18, PRP31, PRP38, SNU13, SNU23, SNU66, SNU114, SPP381, SMB1, SMD1, SMD2, SMD3, SMX2, SMX3, LSM2, LSM3, LSM4, LSM5, LSM6, LSM7, LSM8, BRR2 and DIB1. May be found in a complex comprising LSM2-LSM7 without LSM1 or LSM8; the complex associates with pre-P RNA and snoRNA SNR5.

The protein localises to the nucleus. It is found in the nucleolus. Its subcellular location is the cytoplasm. In terms of biological role, component of LSm protein complexes, which are involved in RNA processing and may function in a chaperone-like manner. Component of the cytoplasmic LSM1-LSM7 complex which is involved in mRNA degradation by activating the decapping step. Together with PAT1, the LSM1-LSM7 complex binds to osmotic stress-activated mRNAs to attenuate the osmotic stress response, probably by limiting ribosome access to the mRNA and consequently translation. Component of the nuclear LSM2-LSM8 complex, which is involved in spliceosome assembly. The LSM2-LSM8 complex plays a role in the biogenesis of the spliceosomal U4/U6-U5 tri-snRNP complex by accelerating PRP24-mediated annealing of U4/U6 di-snRNA. The LSM2-LSM8 complex binds U6 snRNA terminating with a non-cyclic 3' phosphate group. LSM2-LSM8 is probably also involved in degradation of nuclear pre-mRNA by targeting them for decapping. LSM2-LSM8 could be involved in processing of pre-tRNAs, pre-rRNAs and U3 snoRNA, although involvement may be indirect. In a complex that probably contains LSM2-LSM7, but not LSM1 or LSM8, associates with the precursor of the RNA component of RNase P (pre-P RNA) and may be involved in maturing pre-P RNA; the complex also associates with snoRNA SNR5. The polypeptide is LSM complex subunit LSM5 (LSM5) (Saccharomyces cerevisiae (strain ATCC 204508 / S288c) (Baker's yeast)).